Reading from the N-terminus, the 359-residue chain is UDP-3-O-acylglucosamine N-acyltransferase (359 aa).

H248 functions as the Proton acceptor in the catalytic mechanism.

The protein belongs to the transferase hexapeptide repeat family. LpxD subfamily. Homotrimer.

It catalyses the reaction a UDP-3-O-[(3R)-3-hydroxyacyl]-alpha-D-glucosamine + a (3R)-hydroxyacyl-[ACP] = a UDP-2-N,3-O-bis[(3R)-3-hydroxyacyl]-alpha-D-glucosamine + holo-[ACP] + H(+). The protein operates within bacterial outer membrane biogenesis; LPS lipid A biosynthesis. Functionally, catalyzes the N-acylation of UDP-3-O-acylglucosamine using 3-hydroxyacyl-ACP as the acyl donor. Is involved in the biosynthesis of lipid A, a phosphorylated glycolipid that anchors the lipopolysaccharide to the outer membrane of the cell. In Chlamydia abortus (strain DSM 27085 / S26/3) (Chlamydophila abortus), this protein is UDP-3-O-acylglucosamine N-acyltransferase.